Here is a 120-residue protein sequence, read N- to C-terminus: Large ribosomal subunit protein uL14 (120 aa).

The protein belongs to the universal ribosomal protein uL14 family. As to quaternary structure, part of the 50S ribosomal subunit. Forms a cluster with proteins L3 and L19. In the 70S ribosome, L14 and L19 interact and together make contacts with the 16S rRNA in bridges B5 and B8.

Functionally, binds to 23S rRNA. Forms part of two intersubunit bridges in the 70S ribosome. The chain is Large ribosomal subunit protein uL14 from Dictyoglomus turgidum (strain DSM 6724 / Z-1310).